The chain runs to 529 residues: T-complex protein 1 subunit delta (529 aa).

The protein belongs to the TCP-1 chaperonin family. In terms of assembly, heterooligomeric complex of about 850 to 900 kDa that forms two stacked rings, 12 to 16 nm in diameter.

Its subcellular location is the cytoplasm. Molecular chaperone; assists the folding of proteins upon ATP hydrolysis. Known to play a role, in vitro, in the folding of actin and tubulin. The chain is T-complex protein 1 subunit delta (CCT4) from Candida glabrata (strain ATCC 2001 / BCRC 20586 / JCM 3761 / NBRC 0622 / NRRL Y-65 / CBS 138) (Yeast).